The chain runs to 273 residues: Putative pyruvate, phosphate dikinase regulatory protein (273 aa).

149–156 (GPSRTSKT) provides a ligand contact to ADP.

Belongs to the pyruvate, phosphate/water dikinase regulatory protein family. PDRP subfamily.

The catalysed reaction is N(tele)-phospho-L-histidyl/L-threonyl-[pyruvate, phosphate dikinase] + ADP = N(tele)-phospho-L-histidyl/O-phospho-L-threonyl-[pyruvate, phosphate dikinase] + AMP + H(+). It catalyses the reaction N(tele)-phospho-L-histidyl/O-phospho-L-threonyl-[pyruvate, phosphate dikinase] + phosphate + H(+) = N(tele)-phospho-L-histidyl/L-threonyl-[pyruvate, phosphate dikinase] + diphosphate. In terms of biological role, bifunctional serine/threonine kinase and phosphorylase involved in the regulation of the pyruvate, phosphate dikinase (PPDK) by catalyzing its phosphorylation/dephosphorylation. In Rickettsia canadensis (strain McKiel), this protein is Putative pyruvate, phosphate dikinase regulatory protein.